Reading from the N-terminus, the 385-residue chain is DNA replication and repair protein RecF (385 aa).

ATP is bound at residue 30–37; sequence GPNGFGKT.

It belongs to the RecF family.

It is found in the cytoplasm. Its function is as follows. The RecF protein is involved in DNA metabolism; it is required for DNA replication and normal SOS inducibility. RecF binds preferentially to single-stranded, linear DNA. It also seems to bind ATP. In Mycobacterium marinum (strain ATCC BAA-535 / M), this protein is DNA replication and repair protein RecF.